Here is a 317-residue protein sequence, read N- to C-terminus: 3',5'-bisphosphate nucleotidase (317 aa).

The Proton acceptor role is filled by aspartate 46. Mg(2+) contacts are provided by glutamate 69, aspartate 118, isoleucine 120, and aspartate 121. Threonine 123 serves as the catalytic Proton acceptor. Threonine 123 contributes to the adenosine 3',5'-bisphosphate binding site. Residues serine 198, histidine 203, serine 227, lysine 230, arginine 244, tyrosine 251, and aspartate 257 each contribute to the AMP site. Residues histidine 203, serine 227, lysine 230, and arginine 244 each coordinate adenosine 3',5'-bisphosphate. Aspartate 257 lines the Mg(2+) pocket. Aspartate 257 serves as a coordination point for adenosine 3',5'-bisphosphate.

It belongs to the inositol monophosphatase superfamily. As to quaternary structure, monomer. It depends on Mg(2+) as a cofactor.

Its subcellular location is the cytoplasm. It carries out the reaction adenosine 3',5'-bisphosphate + H2O = AMP + phosphate. The catalysed reaction is 1D-myo-inositol 1,4-bisphosphate + H2O = 1D-myo-inositol 4-phosphate + phosphate. With respect to regulation, inhibited by Li(2+). Phosphatase that converts 3'-phosphoadenosine 5'-phosphate (PAP) to AMP. Is also able to hydrolyze inositol 1,4-bisphosphate but with less efficiency. This is 3',5'-bisphosphate nucleotidase from Entamoeba histolytica (strain ATCC 30459 / HM-1:IMSS / ABRM).